The sequence spans 130 residues: Small ribosomal subunit protein uS8 (130 aa).

Belongs to the universal ribosomal protein uS8 family. Part of the 30S ribosomal subunit.

Its function is as follows. One of the primary rRNA binding proteins, it binds directly to 16S rRNA central domain where it helps coordinate assembly of the platform of the 30S subunit. This chain is Small ribosomal subunit protein uS8, found in Halorubrum lacusprofundi (strain ATCC 49239 / DSM 5036 / JCM 8891 / ACAM 34).